The following is a 1489-amino-acid chain: MGDAADPREMRKTFIVPAIKPFDHYDFSRAKIACNLAWLVAKAFGTENVPEELQEPFYTDQYDQEHIKPPVVNLLLSAELYCRAGSLILKSDAAKPLLGHDAVIQALAQKGLYVTDQEKLVTERDLHKKPIQMSAHLAMIDTLMMAYTVEMVSIEKVIACAQQYSAFFQATDLPYDIEDAVMYWINKVNEHLKDIMEQEQKLKEHHTVEAPGGQKSPSKWFWKLVPARYRKEQTLLKQLPCIPLVENLLKDGTDGCALAALIHFYCPDVVRLEDICLKETMSLADSLYNLQLIQEFCQEYLNQCCHFTLEDMLYAASSIKSNYLVFMAELFWWFEVVKPSFVQPRVVRPQGAEPVKDMPSIPVLNAAKRNVLDSSSDFPSSGEGATFTQSHHHLPSRYSRPQAHSSASGGIRRSSSMSYVDGFIGTWPKEKRSSVHGVSFDISFDKEDSVQRSTPNRGITRSISNEGLTLNNSHVSKHIRKNLSFKPINGEEEAESIEEELNIDSHSDLKSCVPLNTNELNSNENIHYKLPNGALQNRILLDEFGNQIETPSIEEALQIIHDTEKSPHTPQPDQIANGFFLHSQEMSILNSNIKLNQSSPDNVTDTKGALSPITDNTEVDTGIHVPSEDIPETMDEDSSLRDYTVSLDSDMDDASKFLQDYDIRTGNTREALSPCPSTVSTKSQPGSSASSSSGVKMTSFAEQKFRKLNHTDGKSSGSSSQKTTPEGSELNIPHVVAWAQIPEETGLPQGRDTTQLLASEMVHLRMKLEEKRRAIEAQKKKMEAAFTKQRQKMGRTAFLTVVKKKGDGISPLREEAAGAEDEKVYTDRAKEKESQKTDGQRSKSLADIKESMENPQAKWLKSPTTPIDPEKQWNLASPSEETLNEGEILEYTKSIEKLNSSLHFLQQEMQRLSLQQEMLMQMREQQSWVISPPQPSPQKQIRDFKPSKQAGLSSAIAPFSSDSPRPTHPSPQSSNRKSASFSVKSQRTPRPNELKITPLNRTLTPPRSVDSLPRLRRFSPSQVPIQTRSFVCFGDDGEPQLKESKPKEEVKKEELESKGTLEQRGHNPEEKEIKPFESTVSEVLSLPVTETVCLTPNEDQLNQPTEPPPKPVFPPTAPKNVNLIEVSLSDLKPPEKADVPVEKYDGESDKEQFDDDQKVCCGFFFKDDQKAENDMAMKRAALLEKRLRREKETQLRKQQLEAEMEHKKEETRRKTEEERQKKEDERARREFIRQEYMRRKQLKLMEDMDTVIKPRPQVVKQKKQRPKSIHRDHIESPKTPIKGPPVSSLSLASLNTGDNESVHSGKRTPRSESVEGFLSPSRCGSRNGEKDWENASTTSSVASGTEYTGPKLYKEPSAKSNKHIIQNALAHCCLAGKVNEGQKKKILEEMEKSDANNFLILFRDSGCQFRSLYTYCPETEEINKLTGIGPKSITKKMIEGLYKYNSDRKQFSHIPAKTLSASVDAITIHSHLWQTKRPVTPKKLLPTKA.

Residues W222–E335 enclose the Calponin-homology (CH) domain. The segment at S375 to S415 is disordered. Over residues S405–S415 the composition is skewed to low complexity. 2 positions are modified to phosphoserine: S416 and S418. Phosphothreonine is present on T426. A phosphoserine mark is found at S464, S598, S599, S611, and S673. Disordered regions lie at residues S611–S639 and T668–L730. The span at T668–V679 shows a compositional bias: polar residues. T678 carries the phosphothreonine modification. At S680 the chain carries Phosphoserine. Positions S680–S699 are enriched in low complexity. Positions Q703 to G713 are enriched in basic and acidic residues. The stretch at L756–M793 forms a coiled coil. Positions L812–S844 are disordered. The residue at position 862 (S862) is a Phosphoserine. Residues E887–Q926 adopt a coiled-coil conformation. Positions M922–G1034 are MBD region. The tract at residues Q925–R1017 is disordered. Phosphoserine is present on residues S931 and S936. Polar residues predominate over residues S960–P989. A phosphothreonine mark is found at T997, T1002, and T1004. A phosphoserine mark is found at S1008 and S1019. 3 disordered regions span residues C1032 to S1078, P1096 to Q1152, and K1191 to G1349. A compositionally biased stretch (basic and acidic residues) spans P1039–P1075. Positions T1105–A1117 are enriched in pro residues. Basic and acidic residues-rich tracts occupy residues K1132–Q1152 and K1191–I1252. S1148 is subject to Phosphoserine. Residues K1166 to R1238 adopt a coiled-coil conformation. Positions S1287–N1299 are enriched in polar residues. Phosphoserine occurs at positions 1313, 1319, and 1321. A compositionally biased stretch (polar residues) spans N1334–E1346. The region spanning G1349 to K1483 is the CKK domain.

Belongs to the CAMSAP1 family. As to quaternary structure, interacts with CAMSAP3. Interacts with KATNA1 and KATNB1; leading to regulate the length of CAMSAP2-decorated microtubule stretches. Interacts with a complex formed by AKAP9 and PDE4DIP isoform 13/MMG8/SMYLE, which recruits CAMSAP2 to the Golgi. Interacts with MAPRE1/EB1.

The protein resides in the cytoplasm. It is found in the cytoskeleton. It localises to the golgi apparatus. The protein localises to the cilium basal body. In terms of biological role, key microtubule-organizing protein that specifically binds the minus-end of non-centrosomal microtubules and regulates their dynamics and organization. Specifically recognizes growing microtubule minus-ends and autonomously decorates and stabilizes microtubule lattice formed by microtubule minus-end polymerization. Acts on free microtubule minus-ends that are not capped by microtubule-nucleating proteins or other factors and protects microtubule minus-ends from depolymerization. In addition, it also reduces the velocity of microtubule polymerization. Through the microtubule cytoskeleton, also regulates the organization of cellular organelles including the Golgi and the early endosomes. Essential for the tethering, but not for nucleation of non-centrosomal microtubules at the Golgi: together with Golgi-associated proteins AKAP9 and PDE4DIP, required to tether non-centrosomal minus-end microtubules to the Golgi, an important step for polarized cell movement. Also acts as a regulator of neuronal polarity and development: localizes to non-centrosomal microtubule minus-ends in neurons and stabilizes non-centrosomal microtubules, which is required for neuronal polarity, axon specification and dendritic branch formation. Through the microtubule cytoskeleton, regulates the autophagosome transport. The sequence is that of Calmodulin-regulated spectrin-associated protein 2 from Homo sapiens (Human).